Here is a 534-residue protein sequence, read N- to C-terminus: Cytochrome c oxidase subunit 1 (534 aa).

A helical transmembrane segment spans residues Val-16 to Ile-36. Residues Glu-39 and Gly-44 each contribute to the Ca(2+) site. Residue His-62 participates in Fe(II)-heme a binding. 6 helical membrane-spanning segments follow: residues Ile-64–Leu-84, Ile-101–Ser-121, Ala-147–Val-167, Pro-183–Leu-203, Leu-235–Ile-255, and Val-267–Val-287. His-241 contributes to the Cu cation binding site. The segment at residues His-241 to Tyr-245 is a cross-link (1'-histidyl-3'-tyrosine (His-Tyr)). Tyr-245 contacts O2. His-290 and His-291 together coordinate Cu cation. 2 consecutive transmembrane segments (helical) span residues Met-310–Gly-330 and Met-338–Leu-358. Residues His-368 and Asp-369 each coordinate Mg(2+). A run of 2 helical transmembrane segments spans residues Tyr-372–Gly-392 and Phe-414–Asn-434. Heme a3 is bound at residue His-376. Position 378 (His-378) interacts with Fe(II)-heme a. Position 441 (Pro-441) interacts with Ca(2+). The chain crosses the membrane as a helical span at residues Val-453–Phe-473.

It belongs to the heme-copper respiratory oxidase family. In terms of assembly, component of the cytochrome c oxidase (complex IV, CIV), a multisubunit enzyme composed of a catalytic core of 3 subunits and several supernumerary subunits. The complex exists as a monomer or a dimer and forms supercomplexes (SCs) in the inner mitochondrial membrane with ubiquinol-cytochrome c oxidoreductase (cytochrome b-c1 complex, complex III, CIII). Requires heme as cofactor. It depends on Cu cation as a cofactor.

Its subcellular location is the mitochondrion inner membrane. It catalyses the reaction 4 Fe(II)-[cytochrome c] + O2 + 8 H(+)(in) = 4 Fe(III)-[cytochrome c] + 2 H2O + 4 H(+)(out). It functions in the pathway energy metabolism; oxidative phosphorylation. Its function is as follows. Component of the cytochrome c oxidase, the last enzyme in the mitochondrial electron transport chain which drives oxidative phosphorylation. The respiratory chain contains 3 multisubunit complexes succinate dehydrogenase (complex II, CII), ubiquinol-cytochrome c oxidoreductase (cytochrome b-c1 complex, complex III, CIII) and cytochrome c oxidase (complex IV, CIV), that cooperate to transfer electrons derived from NADH and succinate to molecular oxygen, creating an electrochemical gradient over the inner membrane that drives transmembrane transport and the ATP synthase. Cytochrome c oxidase is the component of the respiratory chain that catalyzes the reduction of oxygen to water. Electrons originating from reduced cytochrome c in the intermembrane space (IMS) are transferred via the dinuclear copper A center (CU(A)) of subunit 2 and heme A of subunit 1 to the active site in subunit 1, a binuclear center (BNC) formed by heme A3 and copper B (CU(B)). The BNC reduces molecular oxygen to 2 water molecules using 4 electrons from cytochrome c in the IMS and 4 protons from the mitochondrial matrix. This chain is Cytochrome c oxidase subunit 1 (COX1), found in Vanderwaltozyma polyspora (strain ATCC 22028 / DSM 70294 / BCRC 21397 / CBS 2163 / NBRC 10782 / NRRL Y-8283 / UCD 57-17) (Kluyveromyces polysporus).